We begin with the raw amino-acid sequence, 174 residues long: Peptide methionine sulfoxide reductase MsrA (174 aa).

Cys-10 is an active-site residue.

This sequence belongs to the MsrA Met sulfoxide reductase family.

The catalysed reaction is L-methionyl-[protein] + [thioredoxin]-disulfide + H2O = L-methionyl-(S)-S-oxide-[protein] + [thioredoxin]-dithiol. The enzyme catalyses [thioredoxin]-disulfide + L-methionine + H2O = L-methionine (S)-S-oxide + [thioredoxin]-dithiol. Has an important function as a repair enzyme for proteins that have been inactivated by oxidation. Catalyzes the reversible oxidation-reduction of methionine sulfoxide in proteins to methionine. The protein is Peptide methionine sulfoxide reductase MsrA of Paenarthrobacter aurescens (strain TC1).